Consider the following 317-residue polypeptide: 2,3,4,5-tetrahydropyridine-2,6-dicarboxylate N-succinyltransferase (317 aa).

Residues Asp166 and Glu183 each coordinate Mg(2+). Catalysis depends on Glu199, which acts as the Acyl-anhydride intermediate. Succinyl-CoA is bound by residues Arg201, Gly216, Ser219, Ala242, 257 to 258 (EA), Gly265, Lys277, and 290 to 293 (RRNS).

The protein belongs to the type 2 tetrahydrodipicolinate N-succinyltransferase family. Homotrimer.

Its subcellular location is the cytoplasm. It carries out the reaction (S)-2,3,4,5-tetrahydrodipicolinate + succinyl-CoA + H2O = (S)-2-succinylamino-6-oxoheptanedioate + CoA. The protein operates within amino-acid biosynthesis; L-lysine biosynthesis via DAP pathway; LL-2,6-diaminopimelate from (S)-tetrahydrodipicolinate (succinylase route): step 1/3. Catalyzes the conversion of the cyclic tetrahydrodipicolinate (THDP) into the acyclic N-succinyl-L-2-amino-6-oxopimelate using succinyl-CoA. This chain is 2,3,4,5-tetrahydropyridine-2,6-dicarboxylate N-succinyltransferase (dapD), found in Mycobacterium tuberculosis (strain CDC 1551 / Oshkosh).